A 136-amino-acid polypeptide reads, in one-letter code: Aspartate 1-decarboxylase (136 aa).

S25 acts as the Schiff-base intermediate with substrate; via pyruvic acid in catalysis. Residue S25 is modified to Pyruvic acid (Ser). T57 contacts substrate. The active-site Proton donor is Y58. 73–75 serves as a coordination point for substrate; that stretch reads GAA.

It belongs to the PanD family. As to quaternary structure, heterooctamer of four alpha and four beta subunits. Pyruvate serves as cofactor. Is synthesized initially as an inactive proenzyme, which is activated by self-cleavage at a specific serine bond to produce a beta-subunit with a hydroxyl group at its C-terminus and an alpha-subunit with a pyruvoyl group at its N-terminus.

Its subcellular location is the cytoplasm. It carries out the reaction L-aspartate + H(+) = beta-alanine + CO2. Its pathway is cofactor biosynthesis; (R)-pantothenate biosynthesis; beta-alanine from L-aspartate: step 1/1. Functionally, catalyzes the pyruvoyl-dependent decarboxylation of aspartate to produce beta-alanine. In Mycolicibacterium smegmatis (strain ATCC 700084 / mc(2)155) (Mycobacterium smegmatis), this protein is Aspartate 1-decarboxylase.